Here is a 466-residue protein sequence, read N- to C-terminus: 3-isopropylmalate dehydratase large subunit (466 aa).

Residues C347, C407, and C410 each coordinate [4Fe-4S] cluster.

This sequence belongs to the aconitase/IPM isomerase family. LeuC type 1 subfamily. In terms of assembly, heterodimer of LeuC and LeuD. It depends on [4Fe-4S] cluster as a cofactor.

It carries out the reaction (2R,3S)-3-isopropylmalate = (2S)-2-isopropylmalate. Its pathway is amino-acid biosynthesis; L-leucine biosynthesis; L-leucine from 3-methyl-2-oxobutanoate: step 2/4. Its function is as follows. Catalyzes the isomerization between 2-isopropylmalate and 3-isopropylmalate, via the formation of 2-isopropylmaleate. The polypeptide is 3-isopropylmalate dehydratase large subunit (Pseudoalteromonas translucida (strain TAC 125)).